Reading from the N-terminus, the 411-residue chain is Alpha-galactosidase (411 aa).

Positions 1-24 (MATHYSIIGGMIIVVLLMIIGSEG) are cleaved as a signal peptide. The propeptide occupies 25–47 (GRLLEKKNRTSAEAEHYNVRRYL). An N-linked (GlcNAc...) asparagine glycan is attached at Asn32. Cysteines 68 and 100 form a disulfide. N-linked (GlcNAc...) asparagine glycosylation occurs at Asn145. Cys148 and Cys179 are oxidised to a cystine. The active-site Nucleophile is the Asp177. 210–214 (EWGWE) lines the substrate pocket. Asp232 serves as the catalytic Proton donor. Asn352 carries N-linked (GlcNAc...) asparagine glycosylation.

Belongs to the glycosyl hydrolase 27 family.

It catalyses the reaction Hydrolysis of terminal, non-reducing alpha-D-galactose residues in alpha-D-galactosides, including galactose oligosaccharides, galactomannans and galactolipids.. In terms of biological role, involved in the hydrolysis of the galactomannan, it splits alpha-linked galactose moieties. It is particularly suitable for the hydrolysis of guar gum to a gum with improved gelling properties. Preferentially cleaves alpha-1,6 glycoside linkages. The protein is Alpha-galactosidase of Cyamopsis tetragonoloba (Guar).